The following is a 117-amino-acid chain: Large ribosomal subunit protein uL23 (117 aa).

Belongs to the universal ribosomal protein uL23 family. In terms of assembly, part of the 50S ribosomal subunit. Contacts protein L29, and trigger factor when it is bound to the ribosome.

One of the early assembly proteins it binds 23S rRNA. One of the proteins that surrounds the polypeptide exit tunnel on the outside of the ribosome. Forms the main docking site for trigger factor binding to the ribosome. In Ruminiclostridium cellulolyticum (strain ATCC 35319 / DSM 5812 / JCM 6584 / H10) (Clostridium cellulolyticum), this protein is Large ribosomal subunit protein uL23.